A 474-amino-acid polypeptide reads, in one-letter code: Phosphatidylserine synthase 2 (474 aa).

Over 1–62 (MLRSDVRRVA…DDGTNTFFWR (62 aa)) the chain is Lumenal. Residues 63–83 (AHTLTVLFILTCSLGYVTLLE) traverse the membrane as a helical segment. The Cytoplasmic segment spans residues 84–96 (ETPQDTAYNAKRG). The chain crosses the membrane as a helical span at residues 97–117 (IIASILVFLCFGVTQAKDGPF). At 118–126 (SRPHPAYWR) the chain is on the lumenal side. A helical membrane pass occupies residues 127–147 (FWLCVSVVYELFLIFILFQTV). The Cytoplasmic portion of the chain corresponds to 148-313 (HDGRQFMKFI…EWKPASSLRR (166 aa)). The helical transmembrane segment at 314 to 334 (WLAVCGIIFVFLLAELNTFYL) threads the bilayer. Lys-335 is a topological domain (lumenal). Residues 336-356 (FVLWMPPEHYLVLLRLVFFVN) form a helical membrane-spanning segment. Over 357-376 (VGGVAMREIYDFMDDLKFHK) the chain is Cytoplasmic. Residues 377-397 (KLGQQAWMVAAITVTEFLIVV) traverse the membrane as a helical segment. Residues 398–403 (KYDPYT) lie on the Lumenal side of the membrane. The chain crosses the membrane as a helical span at residues 404–424 (ITLPLPFYVTQCWILGIVLVL). Over 425-474 (TWTVWRFFIRDITLRYKEIRQQKQHRNEEEKSHRNGDVNSEKDTNKHKKH) the chain is Cytoplasmic. Residues 448-468 (QHRNEEEKSHRNGDVNSEKDT) show a composition bias toward basic and acidic residues. Residues 448-474 (QHRNEEEKSHRNGDVNSEKDTNKHKKH) form a disordered region.

It belongs to the phosphatidyl serine synthase family.

It localises to the endoplasmic reticulum membrane. It carries out the reaction a 1,2-diacyl-sn-glycero-3-phosphoethanolamine + L-serine = a 1,2-diacyl-sn-glycero-3-phospho-L-serine + ethanolamine. It catalyses the reaction 1-hexadecanoyl-2-(9Z-octadecenoyl)-sn-glycero-3-phosphoethanolamine + L-serine = 1-hexadecanoyl-2-(9Z-octadecenoyl)-sn-glycero-3-phospho-L-serine + ethanolamine. The catalysed reaction is 1-hexadecanoyl-2-(4Z,7Z,10Z,13Z,16Z,19Z-docosahexaenoyl)-sn-glycero-3-phosphoethanolamine + L-serine = 1-hexadecanoyl-2-(4Z,7Z,10Z,13Z,16Z,19Z-docosahexaenoyl)-sn-glycero-3-phosphoserine + ethanolamine. The enzyme catalyses 1-octadecanoyl-2-(5Z,8Z,11Z,14Z)-eicosatetraenoyl-sn-glycero-3-phosphoethanolamine + L-serine = 1-octadecanoyl-2-(5Z,8Z,11Z,14Z)-eicosatetraenoyl-sn-glycero-3-phosphoserine + ethanolamine. It carries out the reaction 1-octadecanoyl-2-(4Z,7Z,10Z,13Z,16Z,19Z-docosahexaenoyl)-sn-glycero-3-phosphoethanolamine + L-serine = 1-octadecanoyl-2-(4Z,7Z,10Z,13Z,16Z,19Z-docosahexaenoyl)-sn-glycero-3-phosphoserine + ethanolamine. It catalyses the reaction 1-(1Z-octadecenyl)-2-(4Z,7Z,10Z,13Z,16Z,19Z-docosahexaenoyl)-sn-glycero-3-phosphoethanolamine + L-serine = 1-(1Z-octadecenyl)-2-(4Z,7Z,10Z,13Z,16Z,19Z-docosahexaenoyl)-sn-glycero-3-phospho-L-serine + ethanolamine. The catalysed reaction is 1-octadecanoyl-2-(9Z-octadecenoyl)-sn-glycero-3-phosphoethanolamine + L-serine = 1-octadecanoyl-2-(9Z-octadecenoyl)-sn-glycero-3-phospho-L-serine + ethanolamine. The enzyme catalyses 1-(1Z-octadecenyl)-2-(9Z-octadecenoyl)-sn-glycero-3-phosphoethanolamine + L-serine = 1-(1Z-octadecenyl)-2-(9Z-octadecenoyl)-sn-glycero-3-phospho-L-serine + ethanolamine. It carries out the reaction 1-(1Z-octadecenyl)-2-(5Z,8Z,11Z,14Z- eicosatetraenoyl)-sn-glycero-3-phosphoethanolamine + L-serine = 1-(1Z-octadecenyl)-2-(5Z,8Z,11Z,14Z-eicosatetraenoyl)-sn-glycero-3-phospho-L-serine + ethanolamine. It participates in phospholipid metabolism; phosphatidylserine biosynthesis. Functionally, catalyzes a base-exchange reaction in which the polar head group of phosphatidylethanolamine (PE) or phosphatidylcholine (PC) is replaced by L-serine. Catalyzes the conversion of phosphatatidylethanolamine and does not act on phosphatidylcholine. Can utilize both phosphatidylethanolamine (PE) plasmalogen and diacyl PE as substrate and the latter is six times better utilized, indicating the importance of an ester linkage at the sn-1 position. Although it shows no sn-1 fatty acyl preference, exhibits significant preference towards docosahexaenoic acid (22:6n-3) compared with 18:1 or 20:4 at the sn-2 position. The polypeptide is Phosphatidylserine synthase 2 (ptdss2) (Xenopus tropicalis (Western clawed frog)).